A 261-amino-acid chain; its full sequence is Cytochrome c oxidase subunit 3 (261 aa).

Residues 1–15 are Mitochondrial matrix-facing; sequence MTHQTHAYHMVNPSP. A helical transmembrane segment spans residues 16–34; sequence WPLTGALSALLMTSGLAMW. Residues 35–40 are Mitochondrial intermembrane-facing; that stretch reads FHYNSM. A helical membrane pass occupies residues 41–66; that stretch reads LLLTLGLMTNLLTMYQWWRDIVREST. The Mitochondrial matrix portion of the chain corresponds to 67–72; that stretch reads FQGHHT. A helical membrane pass occupies residues 73 to 105; sequence LVVQKGLRYGMILFIISEVFFFSGFFWAFYHSS. Residues 106 to 128 are Mitochondrial intermembrane-facing; the sequence is LAPTPELGGCWPPTGIHPLNPME. A helical transmembrane segment spans residues 129–152; it reads VPLLNTSVLLASGVSITWAHHSLM. Residues 153–155 are Mitochondrial matrix-facing; sequence EGN. A helical transmembrane segment spans residues 156 to 183; the sequence is RKHMLQALFITISLGVYFTLLQASEYYE. The Mitochondrial intermembrane portion of the chain corresponds to 184-190; sequence APFTISD. Residues 191–223 traverse the membrane as a helical segment; that stretch reads GIYGSTFFVATGFHGLHVIIGSTFLIVCFLRQL. Over 224-232 the chain is Mitochondrial matrix; the sequence is KFHFTSNHH. Residues 233 to 256 form a helical membrane-spanning segment; that stretch reads FGFEAAAWYWHFVDVVWLFLYVSI. Residues 257–261 lie on the Mitochondrial intermembrane side of the membrane; sequence YWWGS.

The protein belongs to the cytochrome c oxidase subunit 3 family. Component of the cytochrome c oxidase (complex IV, CIV), a multisubunit enzyme composed of 14 subunits. The complex is composed of a catalytic core of 3 subunits MT-CO1, MT-CO2 and MT-CO3, encoded in the mitochondrial DNA, and 11 supernumerary subunits COX4I, COX5A, COX5B, COX6A, COX6B, COX6C, COX7A, COX7B, COX7C, COX8 and NDUFA4, which are encoded in the nuclear genome. The complex exists as a monomer or a dimer and forms supercomplexes (SCs) in the inner mitochondrial membrane with NADH-ubiquinone oxidoreductase (complex I, CI) and ubiquinol-cytochrome c oxidoreductase (cytochrome b-c1 complex, complex III, CIII), resulting in different assemblies (supercomplex SCI(1)III(2)IV(1) and megacomplex MCI(2)III(2)IV(2)).

It is found in the mitochondrion inner membrane. It catalyses the reaction 4 Fe(II)-[cytochrome c] + O2 + 8 H(+)(in) = 4 Fe(III)-[cytochrome c] + 2 H2O + 4 H(+)(out). In terms of biological role, component of the cytochrome c oxidase, the last enzyme in the mitochondrial electron transport chain which drives oxidative phosphorylation. The respiratory chain contains 3 multisubunit complexes succinate dehydrogenase (complex II, CII), ubiquinol-cytochrome c oxidoreductase (cytochrome b-c1 complex, complex III, CIII) and cytochrome c oxidase (complex IV, CIV), that cooperate to transfer electrons derived from NADH and succinate to molecular oxygen, creating an electrochemical gradient over the inner membrane that drives transmembrane transport and the ATP synthase. Cytochrome c oxidase is the component of the respiratory chain that catalyzes the reduction of oxygen to water. Electrons originating from reduced cytochrome c in the intermembrane space (IMS) are transferred via the dinuclear copper A center (CU(A)) of subunit 2 and heme A of subunit 1 to the active site in subunit 1, a binuclear center (BNC) formed by heme A3 and copper B (CU(B)). The BNC reduces molecular oxygen to 2 water molecules using 4 electrons from cytochrome c in the IMS and 4 protons from the mitochondrial matrix. The sequence is that of Cytochrome c oxidase subunit 3 (MT-CO3) from Ceratotherium simum (White rhinoceros).